Reading from the N-terminus, the 447-residue chain is Cytochrome c biogenesis protein CcsB (447 aa).

A run of 3 helical transmembrane segments spans residues 28–48 (LRLAIILLLLIAIFSISGTVI), 87–107 (TWWYLSLLILFGSSLTACTFR), and 173–193 (IGPIIVHAAMLIILAGAIWGA).

It belongs to the Ccs1/CcsB family. As to quaternary structure, may interact with CcsA.

The protein localises to the cellular thylakoid membrane. In terms of biological role, required during biogenesis of c-type cytochromes (cytochrome c6 and cytochrome f) at the step of heme attachment. This Microcystis aeruginosa (strain NIES-843 / IAM M-2473) protein is Cytochrome c biogenesis protein CcsB.